The following is a 998-amino-acid chain: UPF0182 protein AAur_2732 (998 aa).

Transmembrane regions (helical) follow at residues Gly-18–Ala-38, Ile-64–Ile-84, Val-115–Gln-135, Phe-168–Ile-188, Gln-211–Leu-231, Ala-260–Gly-280, and Ile-287–Ile-307. Disordered stretches follow at residues Gly-490 to Gly-518, Leu-888 to Ala-923, and Gln-971 to Ser-998. Residues Pro-496 to Gly-509 show a composition bias toward basic and acidic residues. A compositionally biased stretch (pro residues) spans Thr-908–Gly-919. Over residues Ala-976–Ala-990 the composition is skewed to low complexity.

This sequence belongs to the UPF0182 family.

It is found in the cell membrane. The sequence is that of UPF0182 protein AAur_2732 from Paenarthrobacter aurescens (strain TC1).